The primary structure comprises 864 residues: MADRVDWLQSQSGVCKVGVYSPGDNQHQDWKMDTSTDPVRVLSWLRKDLEKSTAGFQDSRFKPGESSFVEEVAYPVDQRKGFCVDYYNTTNKGSPGRLHFEMSHKENPSQGLISHVGNGGSIDEVSFYANRLTNLVIAMARKEINEKIHGAENKCVHQSLYMGDEPTPHKSLSTVASELVNETVTACSKNISSDKAPGSGDRASGSSQAPGLRYTSTLKIKESTKEGKCPDDKPGTKKSFFYKEVFESRNAGDAKEGGRSLPGDQKLFRTSPDNRPDDFSNSISQGIMTYANSVVSDMMVSIMKTLKIQVKDTTIATILLKKVLMKHAKEVVSDLIDSFMKNLHGVTGSLMTDTDFVSAVKRSFFSHGSQKATDIMDAMLGKLYNVMFAKKFPENIRRARDKSESYSLISTKSRAGDPKLSNLNFAMKSESKLKENLFSTCKLEKEKTCAETLGEHIIKEGLHMWHKSQQKSPGLERAAKLGNAPQEVSFECPDPCEANPPHQPQPPENFANFMCDSDSWAKDLIVSALLLIQYHLAQGGKMDAQSFLEAAASTNFPTNKPPPPSPVVQDECKLKSPPHKICDQEQTEKKDLMSVIFNFIRNLLSETIFKSSRNCESNVHEQNTQEEEIHPCERPKTPCERPITPPAPKFCEDEEATGGALSGLTKMVANQLDNCMNGQMVEHLMDSVMKLCLIIAKSCDSPLSELGEEKCGDASRPNSAFPDNLYECLPVKGTGTAEALLQNAYLTIHNELRGLSGQPPEGCEIPKVIVSNHNLADTVQNKQLQAVLQWVAASELNVPILYFAGDDEGIQEKLLQLSATAVEKGRSVGEVLQSVLRYEKERQLDEAVGNVTRLQLLDWLMANL.

S12 carries the phosphoserine; by STK33 modification. The tract at residues 125 to 138 (VSFYANRLTNLVIA) is PKA-RII subunit binding domain. Disordered stretches follow at residues 190–235 (NISS…DKPG) and 251–281 (AGDA…DFSN). Over residues 204-218 (SGSSQAPGLRYTSTL) the composition is skewed to polar residues. Phosphoserine is present on S206. The segment covering 219-235 (KIKESTKEGKCPDDKPG) has biased composition (basic and acidic residues). Residue S405 is modified to Phosphoserine. Phosphotyrosine is present on Y406. The tract at residues 619 to 638 (VHEQNTQEEEIHPCERPKTP) is disordered. Residues 627 to 638 (EEIHPCERPKTP) show a composition bias toward basic and acidic residues.

Belongs to the AKAP110 family. In terms of assembly, interacts with ROPN1 and ROPN1L. Interacts with QRICH2. Phosphorylated by STK33 during sperm flagella assembly. Phosphorylated on tyrosine.

It is found in the cytoplasmic vesicle. It localises to the secretory vesicle. Its subcellular location is the acrosome. The protein resides in the cell projection. The protein localises to the cilium. It is found in the flagellum. Its function is as follows. Structural component of sperm fibrous sheath. Required for the formation of the subcellular structure of the sperm flagellum, sperm motility and male fertility. The sequence is that of A-kinase anchor protein 3 from Mus musculus (Mouse).